A 370-amino-acid polypeptide reads, in one-letter code: Anthranilate phosphoribosyltransferase (370 aa).

5-phospho-alpha-D-ribose 1-diphosphate contacts are provided by residues Gly82, 85–86 (GD), Thr90, 92–95 (NVST), 110–118 (KHGNRAATS), and Ser122. Gly82 lines the anthranilate pocket. Ser94 lines the Mg(2+) pocket. An anthranilate-binding site is contributed by Asn113. Anthranilate is bound at residue Arg168. Mg(2+) contacts are provided by Asp226 and Glu227.

Belongs to the anthranilate phosphoribosyltransferase family. Homodimer. Requires Mg(2+) as cofactor.

It carries out the reaction N-(5-phospho-beta-D-ribosyl)anthranilate + diphosphate = 5-phospho-alpha-D-ribose 1-diphosphate + anthranilate. Its pathway is amino-acid biosynthesis; L-tryptophan biosynthesis; L-tryptophan from chorismate: step 2/5. Its function is as follows. Catalyzes the transfer of the phosphoribosyl group of 5-phosphorylribose-1-pyrophosphate (PRPP) to anthranilate to yield N-(5'-phosphoribosyl)-anthranilate (PRA). This chain is Anthranilate phosphoribosyltransferase, found in Methanosarcina mazei (strain ATCC BAA-159 / DSM 3647 / Goe1 / Go1 / JCM 11833 / OCM 88) (Methanosarcina frisia).